The chain runs to 66 residues: U10-theraphotoxin-Cg1a 1 (66 aa).

A signal peptide spans 1–21 (MKTSVLFVIFGLALLFCLSFA). Positions 22–29 (AELEDTGR) are excised as a propeptide. Disulfide bonds link C31–C46, C38–C51, and C45–C58.

It belongs to the neurotoxin 10 (Hwtx-1) family. 29 (Jztx-13) subfamily. Expressed by the venom gland.

It is found in the secreted. Its function is as follows. Probable ion channel inhibitor. The sequence is that of U10-theraphotoxin-Cg1a 1 from Chilobrachys guangxiensis (Chinese earth tiger tarantula).